We begin with the raw amino-acid sequence, 669 residues long: Polyamine deacetylase HDAC10 (669 aa).

The histone deacetylase stretch occupies residues 1-323; sequence MGTALVYHED…VCMTVQTLLG (323 aa). Position 20 (Asp20) interacts with substrate. A Substrate specificity motif is present at residues 21-24; that stretch reads PECE. His135 acts as the Proton donor/acceptor in catalysis. The Zn(2+) site is built by Asp172, His174, and Asp265. Tyr305 provides a ligand contact to substrate. A compositionally biased stretch (polar residues) spans 361–373; that stretch reads DVTAVPMSPSSHS. The segment at 361-387 is disordered; that stretch reads DVTAVPMSPSSHSPEGRPPPLLPGGPV. A Phosphoserine modification is found at Ser393.

It belongs to the histone deacetylase family. HD type 2 subfamily. In terms of assembly, interacts with HDAC3. Interacts with HDAC2 and NCOR2/SMRT. Interacts with HSPA8/HSC70. Interacts with MSH2. Widely expressed with high levels in liver and kidney.

It localises to the cytoplasm. It is found in the nucleus. It catalyses the reaction N(8)-acetylspermidine + H2O = spermidine + acetate. The catalysed reaction is N-acetylputrescine + H2O = putrescine + acetate. The enzyme catalyses N-acetylcadaverine + H2O = cadaverine + acetate. It carries out the reaction N(6)-acetyl-L-lysyl-[protein] + H2O = L-lysyl-[protein] + acetate. Functionally, polyamine deacetylase (PDAC), which acts preferentially on N(8)-acetylspermidine, and also on acetylcadaverine and acetylputrescine. Exhibits attenuated catalytic activity toward N(1),N(8)-diacetylspermidine and very low activity, if any, toward N(1)-acetylspermidine. Histone deacetylase activity has been observed in vitro. Has also been shown to be involved in MSH2 deacetylation. The physiological relevance of protein/histone deacetylase activity is unclear and could be very weak. May play a role in the promotion of late stages of autophagy, possibly autophagosome-lysosome fusion and/or lysosomal exocytosis in neuroblastoma cells. May play a role in homologous recombination. May promote DNA mismatch repair. The polypeptide is Polyamine deacetylase HDAC10 (HDAC10) (Homo sapiens (Human)).